The sequence spans 141 residues: Large ribosomal subunit protein uL11 (141 aa).

It belongs to the universal ribosomal protein uL11 family. In terms of assembly, part of the ribosomal stalk of the 50S ribosomal subunit. Interacts with L10 and the large rRNA to form the base of the stalk. L10 forms an elongated spine to which L12 dimers bind in a sequential fashion forming a multimeric L10(L12)X complex. Post-translationally, one or more lysine residues are methylated.

In terms of biological role, forms part of the ribosomal stalk which helps the ribosome interact with GTP-bound translation factors. This chain is Large ribosomal subunit protein uL11, found in Ligilactobacillus salivarius (strain UCC118) (Lactobacillus salivarius).